The primary structure comprises 435 residues: NADH-quinone oxidoreductase subunit D (435 aa).

This sequence belongs to the complex I 49 kDa subunit family. NDH-1 is composed of 14 different subunits. Subunits NuoB, C, D, E, F, and G constitute the peripheral sector of the complex.

It is found in the cell inner membrane. The catalysed reaction is a quinone + NADH + 5 H(+)(in) = a quinol + NAD(+) + 4 H(+)(out). Its function is as follows. NDH-1 shuttles electrons from NADH, via FMN and iron-sulfur (Fe-S) centers, to quinones in the respiratory chain. The immediate electron acceptor for the enzyme in this species is believed to be ubiquinone. Couples the redox reaction to proton translocation (for every two electrons transferred, four hydrogen ions are translocated across the cytoplasmic membrane), and thus conserves the redox energy in a proton gradient. The protein is NADH-quinone oxidoreductase subunit D of Xylella fastidiosa (strain M12).